The sequence spans 602 residues: Threonine--tRNA ligase (602 aa).

Residues 208 to 499 (DHRKLGIELK…LTEHCAGEFP (292 aa)) are catalytic. Zn(2+) contacts are provided by cysteine 300, histidine 351, and histidine 476.

Belongs to the class-II aminoacyl-tRNA synthetase family. As to quaternary structure, homodimer. It depends on Zn(2+) as a cofactor.

Its subcellular location is the cytoplasm. The enzyme catalyses tRNA(Thr) + L-threonine + ATP = L-threonyl-tRNA(Thr) + AMP + diphosphate + H(+). In terms of biological role, catalyzes the attachment of threonine to tRNA(Thr) in a two-step reaction: L-threonine is first activated by ATP to form Thr-AMP and then transferred to the acceptor end of tRNA(Thr). Also edits incorrectly charged L-seryl-tRNA(Thr). The chain is Threonine--tRNA ligase from Campylobacter jejuni subsp. doylei (strain ATCC BAA-1458 / RM4099 / 269.97).